Reading from the N-terminus, the 315-residue chain is Protein SHORT INTERNODES 1 (315 aa).

Gly residues predominate over residues 1-10; it reads MAGFPLGGGS. Disordered regions lie at residues 1 to 24 and 64 to 92; these read MAGF…PPVH and PPAP…GGGG. Residues 70–82 are compositionally biased toward low complexity; it reads AGASSSSSSRGMR. Residues 83-92 are compositionally biased toward gly residues; it reads SSGGGGGGGG. 6 residues coordinate Zn(2+): cysteine 97, cysteine 100, cysteine 108, cysteine 113, cysteine 117, and cysteine 124. A DNA-binding region (zn(2)-C6 fungal-type; degenerate) is located at residues 97 to 124; sequence CQDCGNQAKKDCTHMRCRTCCKSRGFAC. 2 stretches are compositionally biased toward low complexity: residues 143–156 and 172–182; these read QQLA…AATA and RPSATTPTTSS. Positions 143-186 are disordered; that stretch reads QQLAALAASAAATAGGAGPSRDPTKRPRARPSATTPTTSSGDQQ. The Required for homo- and heterodimerization motif lies at 227–230; sequence IGGH.

It belongs to the SHI protein family. Forms homodimers (via C-terminus). Interacts with SPL14/IPA1 (via C-terminus). As to expression, predominantly expressed in axillary buds and young panicles.

Its subcellular location is the nucleus. Its function is as follows. Regulates tillering and panicle branching by modulating SPL14/IPA1 transcriptional activity on the downstream TB1 and DEP1 target genes. Binds directly to the 5'-T/GCTCTAC-3' DNA motif found in the promoter regions of both TB1 and DEP1. Represses the DNA binding activity of SPL14/IPA1 toward the promoters of both TB1 and DEP1. Exhibits weak transcriptional activation activity in yeast cells. The chain is Protein SHORT INTERNODES 1 from Oryza sativa subsp. japonica (Rice).